Reading from the N-terminus, the 79-residue chain is Biotin synthase auxiliary protein (79 aa).

This sequence belongs to the BsaP family. Iron-sulfur cluster is required as a cofactor.

Its function is as follows. Required for the activity of the biotin synthase BioB. The sequence is that of Biotin synthase auxiliary protein from Mycobacterium bovis (strain ATCC BAA-935 / AF2122/97).